The primary structure comprises 67 residues: MAKIDDLKAKSDDQLAVELGEMKREQFNLRFQSATGQLEKPARVREVRRTIAQIKTLQAERQRSATK.

It belongs to the universal ribosomal protein uL29 family.

This chain is Large ribosomal subunit protein uL29, found in Zymomonas mobilis subsp. mobilis (strain ATCC 31821 / ZM4 / CP4).